A 275-amino-acid chain; its full sequence is NH(3)-dependent NAD(+) synthetase (275 aa).

46–53 (GISGGQDS) contacts ATP. Asp-52 lines the Mg(2+) pocket. Position 140 (Arg-140) interacts with deamido-NAD(+). Thr-160 serves as a coordination point for ATP. Glu-165 lines the Mg(2+) pocket. 2 residues coordinate deamido-NAD(+): Lys-173 and Asp-180. Residues Lys-189 and Thr-211 each coordinate ATP. 260-261 (HK) lines the deamido-NAD(+) pocket.

This sequence belongs to the NAD synthetase family. In terms of assembly, homodimer.

The catalysed reaction is deamido-NAD(+) + NH4(+) + ATP = AMP + diphosphate + NAD(+) + H(+). It functions in the pathway cofactor biosynthesis; NAD(+) biosynthesis; NAD(+) from deamido-NAD(+) (ammonia route): step 1/1. In terms of biological role, catalyzes the ATP-dependent amidation of deamido-NAD to form NAD. Uses ammonia as a nitrogen source. This is NH(3)-dependent NAD(+) synthetase from Erwinia tasmaniensis (strain DSM 17950 / CFBP 7177 / CIP 109463 / NCPPB 4357 / Et1/99).